The chain runs to 504 residues: Maturase K (504 aa).

Belongs to the intron maturase 2 family. MatK subfamily.

It is found in the plastid. The protein resides in the chloroplast. Usually encoded in the trnK tRNA gene intron. Probably assists in splicing its own and other chloroplast group II introns. The chain is Maturase K from Quercus lyrata (Overcup oak).